Consider the following 405-residue polypeptide: 1-deoxy-D-xylulose 5-phosphate reductoisomerase (405 aa).

Positions 16, 17, 18, 19, 42, 43, 44, and 130 each coordinate NADPH. Residue lysine 131 participates in 1-deoxy-D-xylulose 5-phosphate binding. NADPH is bound at residue glutamate 132. Position 156 (aspartate 156) interacts with Mn(2+). 1-deoxy-D-xylulose 5-phosphate contacts are provided by serine 157, glutamate 158, serine 192, and histidine 215. Glutamate 158 provides a ligand contact to Mn(2+). Glycine 221 contributes to the NADPH binding site. 1-deoxy-D-xylulose 5-phosphate-binding residues include serine 228, asparagine 233, lysine 234, and glutamate 237. Glutamate 237 is a Mn(2+) binding site.

The protein belongs to the DXR family. It depends on Mg(2+) as a cofactor. Mn(2+) is required as a cofactor.

The catalysed reaction is 2-C-methyl-D-erythritol 4-phosphate + NADP(+) = 1-deoxy-D-xylulose 5-phosphate + NADPH + H(+). It participates in isoprenoid biosynthesis; isopentenyl diphosphate biosynthesis via DXP pathway; isopentenyl diphosphate from 1-deoxy-D-xylulose 5-phosphate: step 1/6. Catalyzes the NADPH-dependent rearrangement and reduction of 1-deoxy-D-xylulose-5-phosphate (DXP) to 2-C-methyl-D-erythritol 4-phosphate (MEP). The protein is 1-deoxy-D-xylulose 5-phosphate reductoisomerase of Pasteurella multocida (strain Pm70).